A 587-amino-acid polypeptide reads, in one-letter code: Inorganic phosphate transporter 2-1, chloroplastic (587 aa).

Residues 1–71 (MTLPYRFSSV…VCPLASFSSY (71 aa)) constitute a chloroplast transit peptide. Residues 74-106 (SEGEEQHHADQPIQNPHESSTVSNESDGKGNAE) are disordered. Positions 85-98 (PIQNPHESSTVSNE) are enriched in polar residues. 12 helical membrane-spanning segments follow: residues 127–147 (AISI…KSLG), 154–174 (TKLL…NIGA), 195–215 (AVMT…THVT), 233–253 (MLLF…LQVA), 265–285 (CIVG…AVFW), 289–309 (AKVA…SFLV), 327–347 (AAAA…SAAL), 352–372 (IFPI…IVFD), 413–433 (LEIV…FMSF), 465–485 (IVIP…GLTM), 523–543 (LGLP…VGFA), and 559–579 (ASWL…TWIF).

The protein belongs to the inorganic phosphate transporter (PiT) (TC 2.A.20.2) family. As to expression, mostly expressed in young green tissues. Present in both auto- and heterotrophic tissues. Also expressed in root stele.

Its subcellular location is the plastid. It localises to the chloroplast inner membrane. Its function is as follows. Low affinity H(+)/Pi chloroplastic cotransporter. Involved in inorganic phosphate (orthophosphate, Pi) uptake in green parts of plants in Pi-sufficient conditions. Required for Pi retranslocation during Pi deprivation. The sequence is that of Inorganic phosphate transporter 2-1, chloroplastic (PHT2-1) from Arabidopsis thaliana (Mouse-ear cress).